We begin with the raw amino-acid sequence, 271 residues long: Hydroxyethylthiazole kinase (271 aa).

Substrate is bound at residue methionine 45. 2 residues coordinate ATP: arginine 121 and threonine 168. Glycine 195 lines the substrate pocket.

It belongs to the Thz kinase family. It depends on Mg(2+) as a cofactor.

It catalyses the reaction 5-(2-hydroxyethyl)-4-methylthiazole + ATP = 4-methyl-5-(2-phosphooxyethyl)-thiazole + ADP + H(+). It participates in cofactor biosynthesis; thiamine diphosphate biosynthesis; 4-methyl-5-(2-phosphoethyl)-thiazole from 5-(2-hydroxyethyl)-4-methylthiazole: step 1/1. In terms of biological role, catalyzes the phosphorylation of the hydroxyl group of 4-methyl-5-beta-hydroxyethylthiazole (THZ). This Bacillus pumilus (strain SAFR-032) protein is Hydroxyethylthiazole kinase.